Reading from the N-terminus, the 207-residue chain is LexA repressor (207 aa).

Positions 28 to 48 form a DNA-binding region, H-T-H motif; the sequence is VREIGEAVGLASSSTVHGHLS. Residues S130 and K168 each act as for autocatalytic cleavage activity in the active site.

The protein belongs to the peptidase S24 family. As to quaternary structure, homodimer.

The catalysed reaction is Hydrolysis of Ala-|-Gly bond in repressor LexA.. Functionally, represses a number of genes involved in the response to DNA damage (SOS response), including recA and lexA. In the presence of single-stranded DNA, RecA interacts with LexA causing an autocatalytic cleavage which disrupts the DNA-binding part of LexA, leading to derepression of the SOS regulon and eventually DNA repair. This chain is LexA repressor, found in Staphylococcus carnosus (strain TM300).